Reading from the N-terminus, the 953-residue chain is MTSATSPIILKWDPKSLEIRTLTVERLLEPLVTQVTTLVNTSNKGPSGKKKGRSKKAHVLAASVEQATQNFLEKGEQIAKESQDLKEELVAAVEDVRKQGETMRIASSEFADDPCSSVKRGTMVRAARALLSAVTRLLILADMADVMRLLSHLKIVEEALEAVKNATNEQDLANRFKEFGKEMVKLNYVAARRQQELKDPHCRDEMAAARGALKKNATMLYTASQAFLRHPDVAATRANRDYVFKQVQEAIAGISNAAQATSPTDEAKGHTGIGELAAALNEFDNKIILDPMTFSEARFRPSLEERLESIISGAALMADSSCTRDDRRERIVAECNAVRQALQDLLSEYMNNTGRKEKGDPLNIAIDKMTKKTRDLRRQLRKAVMDHISDSFLETNVPLLVLIEAAKSGNEKEVKEYAQVFREHANKLVEVANLACSISNNEEGVKLVRMAATQIDSLCPQVINAALTLAARPQSKVAQDNMDVFKDQWEKQVRVLTEAVDDITSVDDFLSVSENHILEDVNKCVIALQEGDVDTLDRTAGAIRGRAARVIHIINAEMENYEAGVYTEKVLEATKLLSETVMPRFAEQVEVAIEALSANVPQPFEENEFIDASRLVYDGVRDIRKAVLMIRTPEELEDDSDFEQEDYDVRSRTSVQTEDDQLIAGQSARAIMAQLPQEEKAKIAEQVEIFHQEKSKLDAEVAKWDDSGNDIIVLAKQMCMIMMEMTDFTRGKGPLKNTSDVINAAKKIAEAGSRMDKLARAVADQCPDSACKQDLLAYLQRIALYCHQLNICSKVKAEVQNLGGELIVSGTGVQSTFTTFYEVDCDVIDGGRASQLSTHLPTCAEGAPIGSGSSDSSMLDSATSLIQAAKNLMNAVVLTVKASYVASTKYQKVYGTAAVNSPVVSWKMKAPEKKPLVKREKPEEFQTRVRRGSQKKHISPVQALSEFKAMDSF.

Phosphothreonine is present on Thr-632. Ser-640, Ser-651, and Ser-901 each carry phosphoserine. The span at 912–927 (EKKPLVKREKPEEFQT) shows a compositional bias: basic and acidic residues. The interval 912–939 (EKKPLVKREKPEEFQTRVRRGSQKKHIS) is disordered. The segment covering 928 to 938 (RVRRGSQKKHI) has biased composition (basic residues). Position 939 is a phosphoserine (Ser-939).

It belongs to the vinculin/alpha-catenin family. Interacts with CDH1 and CDH2. Interacts with ZNF639; recruits CTNNA2 to the nucleus. Interacts with F-actin. Expressed in neural tissues, with strongest expression in fetal and adult brain. Expressed in the developing cortical plate and marginal zone of 20-week-old human fetal brain.

The protein localises to the cell membrane. It is found in the cytoplasm. The protein resides in the cytoskeleton. Its subcellular location is the cell junction. It localises to the adherens junction. The protein localises to the cell projection. It is found in the axon. The protein resides in the nucleus. May function as a linker between cadherin adhesion receptors and the cytoskeleton to regulate cell-cell adhesion and differentiation in the nervous system. Required for proper regulation of cortical neuronal migration and neurite growth. It acts as a negative regulator of Arp2/3 complex activity and Arp2/3-mediated actin polymerization. It thereby suppresses excessive actin branching which would impair neurite growth and stability. Regulates morphological plasticity of synapses and cerebellar and hippocampal lamination during development. Functions in the control of startle modulation. This chain is Catenin alpha-2 (CTNNA2), found in Homo sapiens (Human).